Reading from the N-terminus, the 98-residue chain is Small ribosomal subunit protein bS21B (98 aa).

Positions 61–98 are disordered; the sequence is KLQREGLLPMKPKPVFGAGAGGERGGRGGPGAGPRGPR. A compositionally biased stretch (gly residues) spans 78–98; that stretch reads AGAGGERGGRGGPGAGPRGPR.

The protein belongs to the bacterial ribosomal protein bS21 family.

This is Small ribosomal subunit protein bS21B from Bradyrhizobium diazoefficiens (strain JCM 10833 / BCRC 13528 / IAM 13628 / NBRC 14792 / USDA 110).